The following is a 217-amino-acid chain: ATP-dependent Clp protease proteolytic subunit (217 aa).

Catalysis depends on S121, which acts as the Nucleophile. The active site involves H146.

The protein belongs to the peptidase S14 family. In terms of assembly, fourteen ClpP subunits assemble into 2 heptameric rings which stack back to back to give a disk-like structure with a central cavity, resembling the structure of eukaryotic proteasomes.

It localises to the cytoplasm. The enzyme catalyses Hydrolysis of proteins to small peptides in the presence of ATP and magnesium. alpha-casein is the usual test substrate. In the absence of ATP, only oligopeptides shorter than five residues are hydrolyzed (such as succinyl-Leu-Tyr-|-NHMec, and Leu-Tyr-Leu-|-Tyr-Trp, in which cleavage of the -Tyr-|-Leu- and -Tyr-|-Trp bonds also occurs).. Its function is as follows. Cleaves peptides in various proteins in a process that requires ATP hydrolysis. Has a chymotrypsin-like activity. Plays a major role in the degradation of misfolded proteins. This is ATP-dependent Clp protease proteolytic subunit from Burkholderia cenocepacia (strain HI2424).